A 219-amino-acid chain; its full sequence is Cytidylate kinase (219 aa).

Residue 15 to 23 coordinates ATP; sequence GPAASGKGT.

It belongs to the cytidylate kinase family. Type 1 subfamily.

It is found in the cytoplasm. The enzyme catalyses CMP + ATP = CDP + ADP. The catalysed reaction is dCMP + ATP = dCDP + ADP. The chain is Cytidylate kinase from Brucella melitensis biotype 2 (strain ATCC 23457).